A 735-amino-acid polypeptide reads, in one-letter code: Serine/threonine-protein kinase BRSK2 (735 aa).

The 252-residue stretch at 20–271 (YRLEKTLGKG…LEHIQKHIWY (252 aa)) folds into the Protein kinase domain. ATP is bound by residues 26–34 (LGKGQTGLV) and Lys-49. Residue Asp-142 is the Proton acceptor of the active site. A Phosphothreonine; by LKB1 modification is found at Thr-175. Thr-261 carries the phosphothreonine; by PKA modification. Residue Ser-295 is modified to Phosphoserine. Positions 298 to 340 (DIDPDVLDSMHSLGCFRDRNKLLQDLLSEEENQEKMIYFLLLD) constitute a UBA domain. The segment covering 346 to 367 (PSHEDEDLPPRNEIDPPRKRVD) has biased composition (basic and acidic residues). Disordered stretches follow at residues 346-476 (PSHE…GVPW), 493-514 (FHRR…PESS), and 682-735 (KNGQ…REQP). 7 positions are modified to phosphoserine: Ser-368, Ser-383, Ser-394, Ser-413, Ala-417, Ser-424, and Ser-428. A compositionally biased stretch (low complexity) spans 411–429 (SRSISGASSGLSTSPLSSP). A compositionally biased stretch (pro residues) spans 432 to 446 (TPHPSPRGSPLPTPK). A Phosphoserine modification is found at Ser-456. A phosphothreonine mark is found at Thr-460, Thr-464, and Thr-510. A phosphoserine mark is found at Ser-513 and Ser-514.

The protein belongs to the protein kinase superfamily. CAMK Ser/Thr protein kinase family. SNF1 subfamily. As to quaternary structure, interacts with FZR1, a regulatory subunit of the APC ubiquitin ligase complex. Interacts with COPS5. Interacts with PAK1. It depends on Mg(2+) as a cofactor. Post-translationally, may be phosphorylated at Thr-261 by PKA. Phosphorylated at Thr-175 by STK11/LKB1 in complex with STE20-related adapter-alpha (STRADA) pseudo kinase and CAB39. Not phosphorylated at Thr-175 by CaMKK2. In contrast, it is phosphorylated and activated by CaMKK1. May be inactivated via dephosphorylation of Thr-175 by PP2C. Polyubiquitinated by the APC complex in conjunction with FZR1, leading to its proteasomal degradation. Targeted for proteasomal degradation by interaction with COPS5. BRSK2 levels change during the cell cycle. BRSK2 levels are low at the G1/S boundary and gradually increase as cells progress into G2 phase. BRSK2 levels decrease rapidly at the end of mitosis.

It localises to the cytoplasm. The protein resides in the cytoskeleton. Its subcellular location is the microtubule organizing center. It is found in the centrosome. The protein localises to the perinuclear region. It localises to the endoplasmic reticulum. It carries out the reaction L-seryl-[protein] + ATP = O-phospho-L-seryl-[protein] + ADP + H(+). It catalyses the reaction L-threonyl-[protein] + ATP = O-phospho-L-threonyl-[protein] + ADP + H(+). The catalysed reaction is L-seryl-[tau protein] + ATP = O-phospho-L-seryl-[tau protein] + ADP + H(+). The enzyme catalyses L-threonyl-[tau protein] + ATP = O-phospho-L-threonyl-[tau protein] + ADP + H(+). With respect to regulation, activated by phosphorylation on Thr-175 by STK11/LKB1. Functionally, serine/threonine-protein kinase that plays a key role in polarization of neurons and axonogenesis, cell cycle progress and insulin secretion. Phosphorylates CDK16, CDC25C, MAPT/TAU, PAK1 and WEE1. Following phosphorylation and activation by STK11/LKB1, acts as a key regulator of polarization of cortical neurons, probably by mediating phosphorylation of microtubule-associated proteins such as MAPT/TAU at 'Thr-523' and 'Ser-573'. Also regulates neuron polarization by mediating phosphorylation of WEE1 at 'Ser-642' in post-mitotic neurons, leading to down-regulate WEE1 activity in polarized neurons. Plays a role in the regulation of the mitotic cell cycle progress and the onset of mitosis. Plays a role in the regulation of insulin secretion in response to elevated glucose levels, probably via phosphorylation of CDK16 and PAK1. While BRSK2 phosphorylated at Thr-175 can inhibit insulin secretion, BRSK2 phosphorylated at Thr-261 can promote insulin secretion. Regulates reorganization of the actin cytoskeleton. May play a role in the apoptotic response triggered by endoplasmic reticulum (ER) stress. The sequence is that of Serine/threonine-protein kinase BRSK2 (Brsk2) from Rattus norvegicus (Rat).